The chain runs to 166 residues: MSKPLCSTGLRWLWLVVVVLIIDLGSKYLILQNFALGDTVGLFPSLNLHYARNYGAAFSFLADSGSWQRWFFAGIAIGICVILLVMMYRSKATQKLNNIAYALIIGGALGNLFDRLWHGFVVDMIDFYVGDWHFATFNLADTAICIGAALIVLEGFLPKPTAKEQA.

3 helical membrane-spanning segments follow: residues 12 to 32, 70 to 90, and 102 to 122; these read WLWL…LILQ, WFFA…MYRS, and ALII…GFVV. Catalysis depends on residues Asp123 and Asp141. A helical transmembrane segment spans residues 137–157; sequence FNLADTAICIGAALIVLEGFL.

The protein belongs to the peptidase A8 family.

It localises to the cell inner membrane. The catalysed reaction is Release of signal peptides from bacterial membrane prolipoproteins. Hydrolyzes -Xaa-Yaa-Zaa-|-(S,diacylglyceryl)Cys-, in which Xaa is hydrophobic (preferably Leu), and Yaa (Ala or Ser) and Zaa (Gly or Ala) have small, neutral side chains.. Its pathway is protein modification; lipoprotein biosynthesis (signal peptide cleavage). Functionally, this protein specifically catalyzes the removal of signal peptides from prolipoproteins. This Salmonella typhi protein is Lipoprotein signal peptidase.